A 443-amino-acid chain; its full sequence is 3-isopropylmalate dehydratase large subunit (443 aa).

[4Fe-4S] cluster is bound by residues Cys-347, Cys-407, and Cys-410.

The protein belongs to the aconitase/IPM isomerase family. LeuC type 1 subfamily. In terms of assembly, heterodimer of LeuC and LeuD. [4Fe-4S] cluster is required as a cofactor.

It carries out the reaction (2R,3S)-3-isopropylmalate = (2S)-2-isopropylmalate. It participates in amino-acid biosynthesis; L-leucine biosynthesis; L-leucine from 3-methyl-2-oxobutanoate: step 2/4. Catalyzes the isomerization between 2-isopropylmalate and 3-isopropylmalate, via the formation of 2-isopropylmaleate. In Buchnera aphidicola subsp. Uroleucon sonchi, this protein is 3-isopropylmalate dehydratase large subunit.